A 254-amino-acid chain; its full sequence is tRNA pseudouridine synthase A (254 aa).

Catalysis depends on Asp52, which acts as the Nucleophile. Tyr110 lines the substrate pocket.

Belongs to the tRNA pseudouridine synthase TruA family. In terms of assembly, homodimer.

It carries out the reaction uridine(38/39/40) in tRNA = pseudouridine(38/39/40) in tRNA. In terms of biological role, formation of pseudouridine at positions 38, 39 and 40 in the anticodon stem and loop of transfer RNAs. This Thermodesulfovibrio yellowstonii (strain ATCC 51303 / DSM 11347 / YP87) protein is tRNA pseudouridine synthase A.